Here is a 311-residue protein sequence, read N- to C-terminus: Ribosomal RNA small subunit methyltransferase H (311 aa).

S-adenosyl-L-methionine contacts are provided by residues 34–36 (GGY), Asp51, Phe75, Asp93, and Gln100.

This sequence belongs to the methyltransferase superfamily. RsmH family.

The protein resides in the cytoplasm. It catalyses the reaction cytidine(1402) in 16S rRNA + S-adenosyl-L-methionine = N(4)-methylcytidine(1402) in 16S rRNA + S-adenosyl-L-homocysteine + H(+). Specifically methylates the N4 position of cytidine in position 1402 (C1402) of 16S rRNA. In Caulobacter vibrioides (strain ATCC 19089 / CIP 103742 / CB 15) (Caulobacter crescentus), this protein is Ribosomal RNA small subunit methyltransferase H.